The sequence spans 766 residues: DENN domain-containing protein 1B (766 aa).

The region spanning 14-143 (DLVLKVKCHA…YNHPVPKANT (130 aa)) is the uDENN domain. One can recognise a cDENN domain in the interval 160–296 (GLPTIPESRN…VVSALKNKLK (137 aa)). Residues 298–375 (QSTATGDGVA…DGRLAKLNAG (78 aa)) form the dDENN domain. The FXDXF motif motif lies at 378 to 382 (FSDIF). The tract at residues 472 to 523 (NEKGENREKHKLSQTHLKRPHKSLDGTLYDDDDDDDDIERASKISSEDGEET) is disordered. The segment covering 480 to 492 (KHKLSQTHLKRPH) has biased composition (basic residues). Acidic residues predominate over residues 499-509 (LYDDDDDDDDI). A Phosphotyrosine modification is found at Tyr-500. 4 positions are modified to phosphoserine: Ser-516, Ser-517, Ser-530, and Ser-533. A Clathrin box motif is present at residues 547-556 (DLLGEILDTL). Disordered stretches follow at residues 611 to 634 (LGQD…VSSG) and 652 to 732 (LCAD…KPSK). Ser-632 and Ser-633 each carry phosphoserine. Residues 694–704 (TPGQAPLQSED) are compositionally biased toward polar residues. A compositionally biased stretch (basic and acidic residues) spans 722–732 (KAGKEDTKPSK).

In terms of assembly, interacts with RAB35. Interacts with clathrin heavy chain/CLTC. Interacts with components of the adapter protein complex 2 (AP-2) AP2A2 and AP2B1. Interacts with CD3E. In terms of processing, phosphorylated on serine and/or threonine, possibly regulating the guanine nucleotide exchange factor (GEF) activity. Expressed in a subset of dendritic cells (DCs).

It localises to the cytoplasm. It is found in the cytosol. The protein resides in the cytoplasmic vesicle. Its subcellular location is the clathrin-coated vesicle. Functionally, guanine nucleotide exchange factor (GEF) for RAB35 that acts as a regulator of T-cell receptor (TCR) internalization in TH2 cells. Acts by promoting the exchange of GDP to GTP, converting inactive GDP-bound RAB35 into its active GTP-bound form. Plays a role in clathrin-mediated endocytosis. Controls cytokine production in TH2 lymphocytes by controlling the rate of TCR internalization and routing to endosomes: acts by mediating clathrin-mediated endocytosis of TCR via its interaction with the adapter protein complex 2 (AP-2) and GEF activity. Dysregulation leads to impaired TCR down-modulation and recycling, affecting cytokine production in TH2 cells. This is DENN domain-containing protein 1B from Mus musculus (Mouse).